The chain runs to 450 residues: Paired box protein Pax-8 (450 aa).

A DNA-binding region (paired) is located at residues 9–135 (GHGGLNQLGG…SSINRIIRTK (127 aa)). Residues 12–68 (GLNQLGGAFVNGRPLPEVVRQRIVDLAHQGVRPCDISRQLRVSHGCVSKILGRYYET) form a PAI subdomain region. Residues 87-135 (KVVEKIGDYKRQNPTMFAWEIRDRLLAEGVCDNDTVPSVSSINRIIRTK) form an RED subdomain region. Over residues 159-182 (LIPSSAVTPPESPQSDSLGSTYSI) the composition is skewed to polar residues. A disordered region spans residues 159–222 (LIPSSAVTPP…QSSSSGPRKH (64 aa)). S303 is subject to Phosphoserine.

As to quaternary structure, interacts with WWTR1. In terms of tissue distribution, expressed in the excretory system, thyroid gland and Wilms tumors.

It localises to the nucleus. Transcription factor for the thyroid-specific expression of the genes exclusively expressed in the thyroid cell type, maintaining the functional differentiation of such cells. The polypeptide is Paired box protein Pax-8 (PAX8) (Homo sapiens (Human)).